Consider the following 740-residue polypeptide: F-BAR and double SH3 domains protein 2 (740 aa).

One can recognise an F-BAR domain in the interval 8 to 282; that stretch reads VKVTQELKNI…NSSKVVRDYN (275 aa). Positions 303 to 323 are disordered; that stretch reads PCDSDTSRQLESETGTTEEHS. The span at 307–323 shows a compositional bias: basic and acidic residues; that stretch reads DTSRQLESETGTTEEHS. The stretch at 356–397 forms a coiled coil; that stretch reads GAAVSEQSRAELEQKIDEARENIRKAEIIKLKAEARLDLLKQ. 2 SH3 domains span residues 469-530 and 567-629; these read NYPL…FPTS and ASVC…ELSA. The interval 567 to 629 is required and sufficient for location at clathrin-coated pits; the sequence is ASVCFVKALY…PSVLVEELSA (63 aa). Positions 633–740 are disordered; it reads GDTPWMREIQ…KIEDVEITLV (108 aa). Residues 646–657 show a composition bias toward pro residues; sequence SPKPHASLPPLP. Residues Ser-675 and Ser-681 each carry the phosphoserine modification.

In terms of assembly, homodimer. Interacts (via SH3 domain 2) with ITSN1 (via SH3 domain 4). Recruited to clathrin-coated pits during a mid-to-late stage of assembly via interaction with ITSN1. Interacts (via SH3 domain 1) with WASL. Interacts with WAS. Interacts with CASK and MAGI1. CASK inhibits interaction with MAGI1. Phosphorylated. Phosphorylation on a Ser residue is important for recruitment to the cell membrane and for its role in promoting endocytosis. In terms of tissue distribution, liver, brain, heart, placenta, skeletal muscle, pancreas, lung and kidney.

The protein resides in the cytoplasm. It localises to the cell junction. Its subcellular location is the membrane. It is found in the clathrin-coated pit. The protein localises to the cell membrane. The protein resides in the cell projection. It localises to the stereocilium. Adapter protein that plays a role in endocytosis via clathrin-coated pits. Contributes to the internalization of cell surface receptors, such as integrin ITGB1 and transferrin receptor. Promotes endocytosis of EGFR in cancer cells, and thereby contributes to the down-regulation of EGFR signaling. Recruited to clathrin-coated pits during a mid-to-late stage of assembly, where it is required for normal progress from U-shaped intermediate stage pits to terminal, omega-shaped pits. Binds to membranes enriched in phosphatidylinositol 3,4-bisphosphate or phosphatidylinositol 3,4,5-trisphosphate. When bound to membranes, promotes actin polymerization via its interaction with WAS and/or WASL which leads to the activation of the Arp2/3 complex. Does not promote actin polymerisation in the absence of membranes. This chain is F-BAR and double SH3 domains protein 2 (FCHSD2), found in Homo sapiens (Human).